We begin with the raw amino-acid sequence, 400 residues long: Endoglucanase A (400 aa).

A signal peptide spans 1–32 (MTKTFKKFSIAGLALLFMATAAFAGWSTKASA). Glu187 acts as the Proton donor in catalysis. Glu328 functions as the Nucleophile in the catalytic mechanism.

The protein belongs to the glycosyl hydrolase 5 (cellulase A) family.

The protein resides in the secreted. It carries out the reaction Endohydrolysis of (1-&gt;4)-beta-D-glucosidic linkages in cellulose, lichenin and cereal beta-D-glucans.. Its activity is regulated as follows. Strongly inhibited by Hg(2+), Ag(+) and Fe(3+). To a lesser extent, is also inhibited by Pb(2+), Mn(2+), Sn(2+) and Cu(2+). By contrast, Ni(2+), Zn(2+), Co(2+), Ba(2+) and NH(4)(+) do not affect enzyme activity, while 10 mM Ca(2+), and Mg(2+) produce a stimulating effect. Is also strongly inhibited by chemicals such as N-bromosuccinimide and dimethyl(2-dihydroxy-5-nitrobenzyl)sulphonium bromide. Is not affected by N-acetylimidazole. Its function is as follows. Endoglucanase with high activity on carboxymethylcellulose (CMC) and lichenan, but not active on Avicel. This is Endoglucanase A (celA) from Paenibacillus barcinonensis.